The following is a 273-amino-acid chain: Dermonecrotic toxin LspaSicTox-alphaIA2i (273 aa).

His5 is an active-site residue. Mg(2+) contacts are provided by Glu25 and Asp27. Catalysis depends on His41, which acts as the Nucleophile. Disulfide bonds link Cys45–Cys51 and Cys47–Cys190. Position 85 (Asp85) interacts with Mg(2+).

Belongs to the arthropod phospholipase D family. Class II subfamily. Requires Mg(2+) as cofactor. Expressed by the venom gland.

It localises to the secreted. It carries out the reaction an N-(acyl)-sphingosylphosphocholine = an N-(acyl)-sphingosyl-1,3-cyclic phosphate + choline. The catalysed reaction is an N-(acyl)-sphingosylphosphoethanolamine = an N-(acyl)-sphingosyl-1,3-cyclic phosphate + ethanolamine. The enzyme catalyses a 1-acyl-sn-glycero-3-phosphocholine = a 1-acyl-sn-glycero-2,3-cyclic phosphate + choline. It catalyses the reaction a 1-acyl-sn-glycero-3-phosphoethanolamine = a 1-acyl-sn-glycero-2,3-cyclic phosphate + ethanolamine. Functionally, dermonecrotic toxins cleave the phosphodiester linkage between the phosphate and headgroup of certain phospholipids (sphingolipid and lysolipid substrates), forming an alcohol (often choline) and a cyclic phosphate. This toxin acts on sphingomyelin (SM). It may also act on ceramide phosphoethanolamine (CPE), lysophosphatidylcholine (LPC) and lysophosphatidylethanolamine (LPE), but not on lysophosphatidylserine (LPS), and lysophosphatidylglycerol (LPG). It acts by transphosphatidylation, releasing exclusively cyclic phosphate products as second products. Induces dermonecrosis, hemolysis, increased vascular permeability, edema, inflammatory response, and platelet aggregation. The sequence is that of Dermonecrotic toxin LspaSicTox-alphaIA2i from Loxosceles spadicea (Recluse spider).